Reading from the N-terminus, the 1003-residue chain is Translation initiation factor IF-2 (1003 aa).

5 stretches are compositionally biased toward basic and acidic residues: residues 61–74, 139–169, 180–206, 219–229, and 252–290; these read EKFSQERQNKDRNK, PVVEKVVERKETPQPEKETPKPVVVEEKKPE, LEEKKEPKIEKTEEKTPQVKEMEKETP, VFKIRPTEFKS, and SKEEKRKEREEKDKQRQEQRKLMKDAIIKEIRKGDDKIS. 2 disordered regions span residues 61 to 81 and 135 to 362; these read EKFSQERQNKDRNKASISIEG and PKAE…KDRF. A compositionally biased stretch (low complexity) spans 315–350; the sequence is NAAGTTNAGGASNNNQRNDNANRPNRNNNSKPNGNN. The 171-residue stretch at 502-672 folds into the tr-type G domain; the sequence is PRAPIVTVMG…LLEAEMLDLK (171 aa). The tract at residues 511–518 is G1; the sequence is GHVDHGKT. 511 to 518 serves as a coordination point for GTP; the sequence is GHVDHGKT. Residues 536–540 form a G2 region; that stretch reads GITQH. The tract at residues 558 to 561 is G3; sequence DTPG. GTP is bound by residues 558–562 and 612–615; these read DTPGH and NKVD. The G4 stretch occupies residues 612 to 615; that stretch reads NKVD. Residues 648-650 form a G5 region; it reads SAK.

The protein belongs to the TRAFAC class translation factor GTPase superfamily. Classic translation factor GTPase family. IF-2 subfamily.

The protein localises to the cytoplasm. In terms of biological role, one of the essential components for the initiation of protein synthesis. Protects formylmethionyl-tRNA from spontaneous hydrolysis and promotes its binding to the 30S ribosomal subunits. Also involved in the hydrolysis of GTP during the formation of the 70S ribosomal complex. The protein is Translation initiation factor IF-2 of Phocaeicola vulgatus (strain ATCC 8482 / DSM 1447 / JCM 5826 / CCUG 4940 / NBRC 14291 / NCTC 11154) (Bacteroides vulgatus).